A 255-amino-acid polypeptide reads, in one-letter code: Ribosomal RNA large subunit methyltransferase E (255 aa).

The S-adenosyl-L-methionine site is built by Gly-50, Trp-52, Asp-68, Asp-84, and Asp-108. Lys-148 functions as the Proton acceptor in the catalytic mechanism. The TRAM domain occupies 195–253 (PVRSGEIYDVTVDSVGRTGDGIAMIQGFAVIVKNASPGERLRIKIGPVKQRFAFASILE).

The protein belongs to the class I-like SAM-binding methyltransferase superfamily. RNA methyltransferase RlmE family.

It is found in the cytoplasm. The enzyme catalyses uridine(2552) in 23S rRNA + S-adenosyl-L-methionine = 2'-O-methyluridine(2552) in 23S rRNA + S-adenosyl-L-homocysteine + H(+). Its function is as follows. Specifically methylates the uridine in position 2552 of 23S rRNA at the 2'-O position of the ribose in the fully assembled 50S ribosomal subunit. This is Ribosomal RNA large subunit methyltransferase E from Methanothrix thermoacetophila (strain DSM 6194 / JCM 14653 / NBRC 101360 / PT) (Methanosaeta thermophila).